Consider the following 399-residue polypeptide: Endonuclease III homolog 1 (399 aa).

Residues Met1 to Glu26 constitute a mitochondrion transit peptide. Residues Arg14–Ile37 carry the Bipartite nuclear localization signal motif. Lys194 is covalently cross-linked (Glycyl lysine isopeptide (Lys-Gly) (interchain with G-Cter in SUMO)). Residues Phe223 to Leu247 form the HhH domain. The Nucleophile; for N-glycosylase activity role is filled by Lys243.

Belongs to the Nth/MutY family. In terms of processing, monosumoylated. Sumoylation is associated with targeting of NTG1 to nuclei containing oxidative DNA damage.

It localises to the nucleus. It is found in the mitochondrion. It catalyses the reaction 2'-deoxyribonucleotide-(2'-deoxyribose 5'-phosphate)-2'-deoxyribonucleotide-DNA = a 3'-end 2'-deoxyribonucleotide-(2,3-dehydro-2,3-deoxyribose 5'-phosphate)-DNA + a 5'-end 5'-phospho-2'-deoxyribonucleoside-DNA + H(+). Its function is as follows. Bifunctional DNA N-glycosylase with associated apurinic/apyrimidinic (AP) lyase function that catalyzes the first step in base excision repair (BER), the primary repair pathway for the repair of oxidative DNA damage. The DNA N-glycosylase activity releases the damaged DNA base from DNA by cleaving the N-glycosidic bond, leaving an AP site. The AP-lyase activity cleaves the phosphodiester bond 3' to the AP site by a beta-elimination. Primarily recognizes and repairs oxidative base damage of pyrimidines, but also purine-derived lesions, alkylation damage and cytosine photoproducts generated by UV irradiation as well as abasic sites. Also has 8-oxoguanine DNA glycosylase activity. The AP lyase can incise AP sites opposite all four bases. May also play a role in the regulation of mtDNA copy number by introducing a double-stranded break (DSB) at the mtDNA replication origin ori5, initiating the rolling-circle mtDNA replication. The sequence is that of Endonuclease III homolog 1 from Saccharomyces cerevisiae (strain ATCC 204508 / S288c) (Baker's yeast).